The sequence spans 165 residues: Anterior gradient protein 3 (165 aa).

The N-terminal stretch at 1–20 (MLHSALALCLLLITVSSNLA) is a signal peptide. The Prevents secretion from ER signature appears at 162–165 (QSEL).

Belongs to the AGR family. In terms of assembly, interacts with LYPD3 and DAG1 (alphaDAG1). As to expression, expressed in the ciliated cells of the airway epithelium. Not detected in the mucous cells.

The protein localises to the endoplasmic reticulum. It is found in the cytoplasm. Its function is as follows. Required for calcium-mediated regulation of ciliary beat frequency and mucociliary clearance in the airway. Might be involved in the regulation of intracellular calcium in tracheal epithelial cells. This is Anterior gradient protein 3 from Mus musculus (Mouse).